Reading from the N-terminus, the 140-residue chain is Transcription antitermination protein NusB (140 aa).

The protein belongs to the NusB family.

Its function is as follows. Involved in transcription antitermination. Required for transcription of ribosomal RNA (rRNA) genes. Binds specifically to the boxA antiterminator sequence of the ribosomal RNA (rrn) operons. The chain is Transcription antitermination protein NusB from Streptococcus pneumoniae serotype 2 (strain D39 / NCTC 7466).